Consider the following 366-residue polypeptide: Methylthioribose-1-phosphate isomerase (366 aa).

Asp260 (proton donor) is an active-site residue.

This sequence belongs to the eIF-2B alpha/beta/delta subunits family. MtnA subfamily.

The protein resides in the cytoplasm. Its subcellular location is the nucleus. The enzyme catalyses 5-(methylsulfanyl)-alpha-D-ribose 1-phosphate = 5-(methylsulfanyl)-D-ribulose 1-phosphate. Its pathway is amino-acid biosynthesis; L-methionine biosynthesis via salvage pathway; L-methionine from S-methyl-5-thio-alpha-D-ribose 1-phosphate: step 1/6. In terms of biological role, catalyzes the interconversion of methylthioribose-1-phosphate (MTR-1-P) into methylthioribulose-1-phosphate (MTRu-1-P). The sequence is that of Methylthioribose-1-phosphate isomerase from Caenorhabditis briggsae.